Reading from the N-terminus, the 398-residue chain is Carbamoyl phosphate synthase small chain (398 aa).

Residues Met-1–Glu-199 form a CPSase region. L-glutamine is bound by residues Ser-54, Gly-251, and Gly-253. One can recognise a Glutamine amidotransferase type-1 domain in the interval His-203–Glu-391. Residue Cys-280 is the Nucleophile of the active site. Residues Leu-281, Gln-284, Asn-322, Gly-324, and Phe-325 each contribute to the L-glutamine site. Active-site residues include His-364 and Glu-366.

This sequence belongs to the CarA family. In terms of assembly, composed of two chains; the small (or glutamine) chain promotes the hydrolysis of glutamine to ammonia, which is used by the large (or ammonia) chain to synthesize carbamoyl phosphate. Tetramer of heterodimers (alpha,beta)4.

The enzyme catalyses hydrogencarbonate + L-glutamine + 2 ATP + H2O = carbamoyl phosphate + L-glutamate + 2 ADP + phosphate + 2 H(+). It catalyses the reaction L-glutamine + H2O = L-glutamate + NH4(+). It functions in the pathway amino-acid biosynthesis; L-arginine biosynthesis; carbamoyl phosphate from bicarbonate: step 1/1. Its pathway is pyrimidine metabolism; UMP biosynthesis via de novo pathway; (S)-dihydroorotate from bicarbonate: step 1/3. Functionally, small subunit of the glutamine-dependent carbamoyl phosphate synthetase (CPSase). CPSase catalyzes the formation of carbamoyl phosphate from the ammonia moiety of glutamine, carbonate, and phosphate donated by ATP, constituting the first step of 2 biosynthetic pathways, one leading to arginine and/or urea and the other to pyrimidine nucleotides. The small subunit (glutamine amidotransferase) binds and cleaves glutamine to supply the large subunit with the substrate ammonia. In Mesorhizobium japonicum (strain LMG 29417 / CECT 9101 / MAFF 303099) (Mesorhizobium loti (strain MAFF 303099)), this protein is Carbamoyl phosphate synthase small chain.